The sequence spans 601 residues: Potassium-transporting ATPase potassium-binding subunit (601 aa).

A run of 12 helical transmembrane segments spans residues 3–23, 62–82, 132–152, 179–199, 283–303, 314–334, 367–387, 397–417, 419–439, 459–479, 523–543, and 564–584; these read ASAW…AWPL, HYAL…YALQ, LGLS…AFAL, AWVL…QGVI, LTNL…CFAF, VAIL…VTAA, FGIS…CGAV, LGGM…GGAG, GLYG…LMIG, VAIL…VLAP, VLLA…VLAI, and GPLF…LNYV.

The protein belongs to the KdpA family. In terms of assembly, the system is composed of three essential subunits: KdpA, KdpB and KdpC.

Its subcellular location is the cell inner membrane. In terms of biological role, part of the high-affinity ATP-driven potassium transport (or Kdp) system, which catalyzes the hydrolysis of ATP coupled with the electrogenic transport of potassium into the cytoplasm. This subunit binds the periplasmic potassium ions and delivers the ions to the membrane domain of KdpB through an intramembrane tunnel. The sequence is that of Potassium-transporting ATPase potassium-binding subunit from Paracidovorax citrulli (strain AAC00-1) (Acidovorax citrulli).